The following is a 249-amino-acid chain: Oxidoreductase asL5 (249 aa).

7 residues coordinate NADP(+): isoleucine 21, lysine 45, asparagine 90, tyrosine 155, lysine 159, isoleucine 188, and threonine 190. Residue tyrosine 155 is the Proton acceptor of the active site. Residue lysine 159 is the Lowers pKa of active site Tyr of the active site.

The protein belongs to the short-chain dehydrogenases/reductases (SDR) family.

Its function is as follows. Oxidoreductase; part of the gene cluster that mediates the biosynthesis of xenovulene A, an unusual meroterpenoid that has potent inhibitory effects on the human gamma-aminobutyrate A (GABAA) benzodiazepine receptor. The first step of xenovulene A biosynthesis is the biosynthesis of 3-methylorcinaldehyde performed by the non-reducing polyketide synthase aspks1. The salicylate hydroxylase asL1 then catalyzes the oxidative dearomatization of 3-methylorcinaldehyde to yield a dearomatized hydroxycyclohexadione. The 2-oxoglutarate-dependent dioxygenase asL3 further catalyzes the oxidative ring expansion to provide the first tropolone metabolite. The cytochrome P450 monooxygenase asR2 allows the synthesis of tropolone hemiacetal. In parallel, a previously unrecognised class of terpene cyclase, asR6, produces alpha-humulene from farnesylpyrophosphate (FPP). The putative Diels-Alderase asR5 probably catalyzes the formation of the tropolone-humulene skeleton by linking humulene and the polyketide moiety. Oxidative-ring contractions catalyzed by asL4 and asL6 then processively remove carbon atoms from the polyketide to yield xenovulene A. The chain is Oxidoreductase asL5 from Sarocladium schorii (Acremonium strictum (strain IMI 501407)).